A 339-amino-acid polypeptide reads, in one-letter code: Glyceraldehyde-3-phosphate dehydrogenase (339 aa).

Residues 11–12 (TI) and glycine 110 each bind NAD(+). 139-141 (SCN) is a D-glyceraldehyde 3-phosphate binding site. The active-site Nucleophile is cysteine 140. Arginine 168 contributes to the NAD(+) binding site. 194-195 (HG) serves as a coordination point for D-glyceraldehyde 3-phosphate. Glutamine 301 contributes to the NAD(+) binding site.

The protein belongs to the glyceraldehyde-3-phosphate dehydrogenase family. Homotetramer.

The protein resides in the cytoplasm. The catalysed reaction is D-glyceraldehyde 3-phosphate + phosphate + NADP(+) = (2R)-3-phospho-glyceroyl phosphate + NADPH + H(+). It catalyses the reaction D-glyceraldehyde 3-phosphate + phosphate + NAD(+) = (2R)-3-phospho-glyceroyl phosphate + NADH + H(+). It functions in the pathway carbohydrate degradation; glycolysis; pyruvate from D-glyceraldehyde 3-phosphate: step 1/5. The protein is Glyceraldehyde-3-phosphate dehydrogenase of Methanospirillum hungatei JF-1 (strain ATCC 27890 / DSM 864 / NBRC 100397 / JF-1).